Here is a 1788-residue protein sequence, read N- to C-terminus: Genome polyprotein (1788 aa).

Residues 1–184 (MMMASKDVVA…LCPLPPIDLR (184 aa)) form an interaction with host MAP1LC3A/LC3 region. A compositionally biased stretch (low complexity) spans 58 to 68 (GRTTPEPTGTA). The tract at residues 58–86 (GRTTPEPTGTAGPPPKQQRDRPPRTQEEV) is disordered. The segment covering 74 to 84 (QQRDRPPRTQE) has biased composition (basic and acidic residues). Positions 185 to 399 (NMEPASEPTI…ASLLPDFHLQ (215 aa)) are interaction with NTPase. Residues 302-399 (HPTQSWSQQT…ASLLPDFHLQ (98 aa)) are interaction with NS4. Host ER membrane association regions lie at residues 319 to 350 (KLEL…KPLN) and 361 to 399 (TFMG…FHLQ). The segment at 400 to 575 (GPEDLARDLV…GKTKAAEHLA (176 aa)) is interaction with NS1-2 and NS4 and homooligomerization. The SF3 helicase domain occupies 533-698 (RISMARSALA…EQIRRVSPGD (166 aa)). 561-568 (GPPGIGKT) is a binding site for ATP. Residues 652-757 (AIVITTNAPG…AVALTMERQD (106 aa)) are important for mitochondrion targeting. A functions as endoplasmic reticulum export signal region spans residues 827–833 (YSLESDG). The host membrane association stretch occupies residues 866-911 (RAVAYASCIQSAITSILQIAGSALVVNRAVKRMFGTRTATLSLEGP). The segment at 948–979 (EEVAHTEIPSATMEGKNKGKNKKGRGRRNNYN) is disordered. Over residues 965-975 (KGKNKKGRGRR) the composition is skewed to basic residues. Residues 988 to 993 (DEEYEE) are acidic. Position 991 is an O-(5'-phospho-RNA)-tyrosine (Y991). The tract at residues 1083–1099 (WADDEREVDYNEKISFE) is interaction with host EIF4G. Residues 1100 to 1280 (APPTLWSRVT…QASEGETTLE (181 aa)) enclose the Peptidase C37 domain. Catalysis depends on for 3CLpro activity residues H1129, E1153, and C1238. The 122-residue stretch at 1515–1636 (KYHFDADYTA…STDIEFDPAK (122 aa)) folds into the RdRp catalytic domain. Mg(2+) contacts are provided by D1519, D1521, D1623, and E1624.

Homodimer. Homooligomer. Interacts with NTPase; this interaction increases the proapoptotic activity of the NTPase and is crucial for the formation of the viral replication complex. Interacts with NS4; this interaction is crucial for the formation of the viral replication complex. Interacts (via N-terminus) with host VAPA. Interacts with host MAP1LC3A/LC3; this interaction does not seem to be linked to host autophagy, but rather plays a role in the formation of viral factories. In terms of assembly, homooligomer. Interacts with NS1-2; this interaction increases the proapoptotic activity of the NTPase and is crucial for the formation of the viral replication complex. Interacts with NS4; this interaction increases the proapoptotic activity of the NTPase. As to quaternary structure, homodimer. Monomer; in solution. Interacts with NTPase; this interaction increases the proapoptotic activity of the NTPase. Interacts with NS1-2; this interaction is crucial for the formation of the viral replication complex. In terms of assembly, monomer. Interacts with the RNA-directed RNA polymerase; this interaction induces the multimerization of the RdRp and enhances its activity. Interacts with host IEF4G1; this interaction plays a role in translation of viral proteins. As to quaternary structure, homohexamer; also forms fibrous hexameric oligomer. Interacts with the viral genome-linked protein; this interaction induces the multimerization of the RdRp and enhances its activity. Mg(2+) is required as a cofactor. Requires Mn(2+) as cofactor. In terms of processing, specific enzymatic cleavages in vivo yield mature proteins. 3CLpro is first autocatalytically cleaved, then processes the whole polyprotein. NS1/2-3 and NS3-4 sites are cleaved rapidly and NS4-5, NS5-6, and NS6-7 sites are processed subsequently and less efficiently. VPg is uridylylated by the polymerase and is covalently attached to the 5'-end of the polyadenylated genomic and subgenomic RNAs. This uridylylated form acts as a nucleotide-peptide primer for the polymerase.

The protein resides in the host Golgi apparatus membrane. It localises to the host endoplasmic reticulum membrane. The enzyme catalyses a ribonucleoside 5'-triphosphate + H2O = a ribonucleoside 5'-diphosphate + phosphate + H(+). It carries out the reaction Endopeptidase with a preference for cleavage when the P1 position is occupied by Glu-|-Xaa and the P1' position is occupied by Gly-|-Yaa.. The catalysed reaction is RNA(n) + a ribonucleoside 5'-triphosphate = RNA(n+1) + diphosphate. Its function is as follows. Induces the proliferation of the host smooth ER membranes forming long tubular structures. These remodeled membranes probably form the viral factories that contain the replication complex. May play a role in viral replication by interacting with host VAPA, a vesicle-associated membrane protein that plays a role in SNARE-mediated vesicle fusion. This interaction may target replication complex to intracellular membranes. Functionally, displays NTPase activity, but no helicase activity. Induces the formation of convoluted membranes derived from the host ER. These remodeled membranes probably form the viral factories that contain the replication complex. Initiates host cell death by targeting the mitochondrial outer membrane, leading to the permeabilization of mitochondria, programmed host cell death and viral egress. Probably plays a role in preventing the assembly of host stress granules. Probable key protein responsible for the formation of membrane alterations by the virus. Induces the formation of convoluted membranes derived from the host ER. These remodeled membranes probably form the viral factories that contain the replication complex. May play a role in targeting replication complex to intracellular membranes. In terms of biological role, viral genome-linked protein is covalently linked to the 5'-end of the positive-strand, negative-strand genomic RNAs and subgenomic RNA. Acts as a genome-linked replication primer. May recruit ribosome to viral RNA thereby promoting viral proteins translation. Interacts with host translation initiation complex to allow the translation of viral proteins. Induces the formation of aggregates of RNA-directed RNA polymerase in the presence of RNA. Through its interaction with the viral RNA-directed RNA polymerase, plays a crucial role in enhancing the polymerase activity. Its function is as follows. Processes the polyprotein. 3CLpro-RdRp is first released by autocleavage, then all other proteins are cleaved. May cleave polyadenylate-binding protein thereby inhibiting cellular translation. Functionally, replicates genomic and antigenomic RNA by recognizing replications specific signals. Also transcribes a subgenomic mRNA by initiating RNA synthesis internally on antigenomic RNA. This sgRNA codes for structural proteins. Catalyzes the covalent attachment VPg with viral RNAs. The sequence is that of Genome polyprotein from Southampton virus (strain GI/Human/United Kingdom/Southampton/1991) (SHV).